The chain runs to 151 residues: uncharacterized protein (151 aa).

The tract at residues 1-151 (MAELASIIRP…SSKTTTLKAR (151 aa)) is disordered. Low complexity predominate over residues 33 to 45 (STGLSDLLMLLQS). Over residues 53–64 (RARRRTVCRPRR) the composition is skewed to basic residues. Positions 108–123 (SSSSNTSSGTATSGES) are enriched in low complexity. A compositionally biased stretch (basic and acidic residues) spans 126-141 (ADWRDSSSASDDDRIP).

This is an uncharacterized protein from Aotus trivirgatus (Three-striped night monkey).